We begin with the raw amino-acid sequence, 56 residues long: Potassium channel toxin alpha-KTx 9.8 (56 aa).

A signal peptide spans 1–19 (MSRLFTLVLIVLAMNVMMA). Residues 20–28 (IISDPVVEA) constitute a propeptide that is removed on maturation. Intrachain disulfides connect cysteine 31–cysteine 47, cysteine 34–cysteine 52, and cysteine 38–cysteine 54.

Belongs to the short scorpion toxin superfamily. Potassium channel inhibitor family. Alpha-KTx 09 subfamily. Expressed by the venom gland.

Its subcellular location is the secreted. Its function is as follows. Potassium channel inhibitor. The sequence is that of Potassium channel toxin alpha-KTx 9.8 from Buthus israelis (Israeli scorpion).